The primary structure comprises 925 residues: Translation initiation factor IF-2 (925 aa).

2 disordered regions span residues 52 to 84 (GGGKAAEGAAKAPAKAAAKGDAKTAAKGDVKAP) and 98 to 326 (AGGN…GVRL). Residues 57-68 (AEGAAKAPAKAA) show a composition bias toward low complexity. Positions 69-84 (AKGDAKTAAKGDVKAP) are enriched in basic and acidic residues. Positions 98–138 (AGGNGEAAAPPAQPGGTATTPAAQATPEAPARPGPAAARPS) are enriched in low complexity. Composition is skewed to pro residues over residues 139–169 (APAPGQPKPPAPGQPPRPGATPGPRPGPAPK) and 193–207 (PRPVPRPGAPRPGAP). Over residues 236–296 (RPGGGRPGGP…GAAGAFGRPG (61 aa)) the composition is skewed to gly residues. Over residues 300-309 (RRGRKSKRQK) the composition is skewed to basic residues. The tr-type G domain occupies 421-592 (TRPPVVTVMG…AVLLTADAAL (172 aa)). The interval 430-437 (GHVDHGKT) is G1. 430 to 437 (GHVDHGKT) contributes to the GTP binding site. A G2 region spans residues 455–459 (GITQH). The G3 stretch occupies residues 480-483 (DTPG). Residues 480 to 484 (DTPGH) and 534 to 537 (NKID) each bind GTP. The interval 534–537 (NKID) is G4. The tract at residues 570–572 (SAK) is G5.

The protein belongs to the TRAFAC class translation factor GTPase superfamily. Classic translation factor GTPase family. IF-2 subfamily.

It is found in the cytoplasm. In terms of biological role, one of the essential components for the initiation of protein synthesis. Protects formylmethionyl-tRNA from spontaneous hydrolysis and promotes its binding to the 30S ribosomal subunits. Also involved in the hydrolysis of GTP during the formation of the 70S ribosomal complex. The chain is Translation initiation factor IF-2 from Mycolicibacterium paratuberculosis (strain ATCC BAA-968 / K-10) (Mycobacterium paratuberculosis).